We begin with the raw amino-acid sequence, 311 residues long: Coproporphyrin III ferrochelatase (311 aa).

Residues Tyr12, Arg29, 45–46 (RY), Ser53, and Tyr124 each bind Fe-coproporphyrin III. His182 and Glu263 together coordinate Fe(2+).

It belongs to the ferrochelatase family.

The protein resides in the cytoplasm. It catalyses the reaction Fe-coproporphyrin III + 2 H(+) = coproporphyrin III + Fe(2+). The protein operates within porphyrin-containing compound metabolism; protoheme biosynthesis. In terms of biological role, involved in coproporphyrin-dependent heme b biosynthesis. Catalyzes the insertion of ferrous iron into coproporphyrin III to form Fe-coproporphyrin III. The chain is Coproporphyrin III ferrochelatase from Bacillus mycoides (strain KBAB4) (Bacillus weihenstephanensis).